Here is a 459-residue protein sequence, read N- to C-terminus: Glutamyl-tRNA(Gln) amidotransferase subunit A, mitochondrial (459 aa).

Active-site charge relay system residues include K37 and S114. S138 (acyl-ester intermediate) is an active-site residue.

The protein belongs to the amidase family. GatA subfamily. As to quaternary structure, subunit of the heterotrimeric GatFAB amidotransferase (AdT) complex, composed of A, B and F subunits.

The protein localises to the mitochondrion. The catalysed reaction is L-glutamyl-tRNA(Gln) + L-glutamine + ATP + H2O = L-glutaminyl-tRNA(Gln) + L-glutamate + ADP + phosphate + H(+). Functionally, allows the formation of correctly charged Gln-tRNA(Gln) through the transamidation of misacylated Glu-tRNA(Gln) in the mitochondria. The reaction takes place in the presence of glutamine and ATP through an activated gamma-phospho-Glu-tRNA(Gln). This is Glutamyl-tRNA(Gln) amidotransferase subunit A, mitochondrial from Yarrowia lipolytica (strain CLIB 122 / E 150) (Yeast).